The chain runs to 329 residues: Cytosolic arginine sensor for mTORC1 subunit 2 (329 aa).

ACT domains follow at residues 72 to 139 (ADAT…MHTL) and 262 to 322 (ELWK…NALQ).

The protein belongs to the GATS family. May form homodimers and heterodimers.

Its subcellular location is the cytoplasm. The protein resides in the cytosol. Functions as a negative regulator of the TORC1 signaling pathway. In Xenopus tropicalis (Western clawed frog), this protein is Cytosolic arginine sensor for mTORC1 subunit 2.